The sequence spans 251 residues: MTDHIRPLIAGNWKMNGLKASTAEFEAMLAGAAEVTGKADLLVCPPATLLAGFADKARGTRAVAVGAQDCHAKASGAHTGDLSAEMLADAGASAIIVGHSERRADHGESDVVVHQKTEAVWRAGLVAIVCVGETQQQRDAGQTLDILRGQLNLSLPQGSTAANLTVAYEPVWAIGTGLTPTAKDVEQIHAFIRTLLIERFNGEGARMRILYGGSVKPSNAAELMAVANVNGALVGGASLKAADFLAIAKGC.

A substrate-binding site is contributed by 12–14 (NWK). Residue His99 is the Electrophile of the active site. Glu169 serves as the catalytic Proton acceptor. Substrate contacts are provided by residues Gly175, Ser214, and 235–236 (GG).

It belongs to the triosephosphate isomerase family. Homodimer.

Its subcellular location is the cytoplasm. It carries out the reaction D-glyceraldehyde 3-phosphate = dihydroxyacetone phosphate. It participates in carbohydrate biosynthesis; gluconeogenesis. The protein operates within carbohydrate degradation; glycolysis; D-glyceraldehyde 3-phosphate from glycerone phosphate: step 1/1. In terms of biological role, involved in the gluconeogenesis. Catalyzes stereospecifically the conversion of dihydroxyacetone phosphate (DHAP) to D-glyceraldehyde-3-phosphate (G3P). This is Triosephosphate isomerase from Bradyrhizobium sp. (strain BTAi1 / ATCC BAA-1182).